The chain runs to 137 residues: Large ribosomal subunit protein uL16c (137 aa).

It belongs to the universal ribosomal protein uL16 family. As to quaternary structure, part of the 50S ribosomal subunit.

Its subcellular location is the plastid. The protein resides in the chloroplast. The protein is Large ribosomal subunit protein uL16c of Bigelowiella natans (Pedinomonas minutissima).